Reading from the N-terminus, the 183-residue chain is MDLSSWFEFTMYDAVFLVVVLGFFFYWLTRSEQPLPAPPKELAPLPMSDMTVEELRKYDGVKNEHILFGLNGTIYDVTRGKGFYGPGKAYGTLAGHDATRALGTMDQNAVSSEWDDHTGISADEQETANEWETQFKFKYLTVGRLVKNSSEKADYGNRKSFVRGAESLDSIINGGDEGTKKDN.

The chain crosses the membrane as a helical span at residues F9 to T29. A Cytochrome b5 heme-binding domain is found at M47–V146.

This sequence belongs to the cytochrome b5 family. MAPR subfamily. In terms of assembly, interacts with unc-40 (via cytoplasmic domain). In terms of tissue distribution, expressed in the AVG pioneer midline neuron and in several nerve ring neurons that extend projecting axons into the right ventral nerve cord.

The protein resides in the membrane. Its subcellular location is the cell projection. The protein localises to the axon. In terms of biological role, transmembrane protein required for the axon guidance of a subset of ventral nerve cord-associated interneurons and motor neurons. May function with the netrin receptor unc-40 in axon guidance. This is Protein vem-1 from Caenorhabditis elegans.